The following is a 133-amino-acid chain: Small ribosomal subunit protein uS8 (133 aa).

It belongs to the universal ribosomal protein uS8 family. Part of the 30S ribosomal subunit. Contacts proteins S5 and S12.

Functionally, one of the primary rRNA binding proteins, it binds directly to 16S rRNA central domain where it helps coordinate assembly of the platform of the 30S subunit. The polypeptide is Small ribosomal subunit protein uS8 (Prochlorococcus marinus (strain SARG / CCMP1375 / SS120)).